Reading from the N-terminus, the 38-residue chain is Large ribosomal subunit protein bL36 (38 aa).

Belongs to the bacterial ribosomal protein bL36 family.

This is Large ribosomal subunit protein bL36 from Chlorobaculum parvum (strain DSM 263 / NCIMB 8327) (Chlorobium vibrioforme subsp. thiosulfatophilum).